Reading from the N-terminus, the 345-residue chain is uncharacterized protein (345 aa).

Residues 1–198 form the CNNM transmembrane domain; that stretch reads MDVLSAVLLA…LSEGLLDHEE (198 aa). The next 2 helical transmembrane spans lie at 3 to 23 and 95 to 115; these read VLSAVLLALLLIGANAFFVGA and VPPALLHTLSLAIVVALHVLL. CBS domains follow at residues 217 to 280 and 285 to 342; these read AVPL…PQTV and VVRP…MRDG. A helical transmembrane segment spans residues 312–332; the sequence is LALVTADNGSVVGMVALEDVV.

It belongs to the TerC family.

It localises to the cell membrane. This is an uncharacterized protein from Mycobacterium tuberculosis (strain CDC 1551 / Oshkosh).